The chain runs to 427 residues: Mitochondrial distribution and morphology protein 12 (427 aa).

The SMP-LTD domain occupies 1 to 387; it reads MSFDINWNQL…WPSWICIDMN (387 aa). A compositionally biased stretch (basic and acidic residues) spans 81-96; that stretch reads NDSKDEHLKNHGDGIN. 2 disordered regions span residues 81 to 168 and 387 to 427; these read NDSK…APPL and NDDD…EAGE. Acidic residues predominate over residues 106 to 133; the sequence is LDDEDEDDEDDDEDDEDEEEEDEDDYDD. Residues 146–161 show a composition bias toward polar residues; that stretch reads LNFNENSTTPSANSFA. Residues 387–402 are compositionally biased toward acidic residues; sequence NDDDDEEEEEESEDND. The segment covering 411-427 has biased composition (basic and acidic residues); sequence NDGKHGDGRTDETEAGE.

The protein belongs to the MDM12 family. In terms of assembly, component of the ER-mitochondria encounter structure (ERMES) or MDM complex, composed of MMM1, MDM10, MDM12 and MDM34. An MMM1 homodimer associates with one molecule of MDM12 on each side in a pairwise head-to-tail manner, and the SMP-LTD domains of MMM1 and MDM12 generate a continuous hydrophobic tunnel for phospholipid trafficking.

The protein resides in the mitochondrion outer membrane. The protein localises to the endoplasmic reticulum membrane. Component of the ERMES/MDM complex, which serves as a molecular tether to connect the endoplasmic reticulum (ER) and mitochondria. Components of this complex are involved in the control of mitochondrial shape and protein biogenesis, and function in nonvesicular lipid trafficking between the ER and mitochondria. MDM12 is required for the interaction of the ER-resident membrane protein MMM1 and the outer mitochondrial membrane-resident beta-barrel protein MDM10. The MDM12-MMM1 subcomplex functions in the major beta-barrel assembly pathway that is responsible for biogenesis of all mitochondrial outer membrane beta-barrel proteins, and acts in a late step after the SAM complex. The MDM10-MDM12-MMM1 subcomplex further acts in the TOM40-specific pathway after the action of the MDM12-MMM1 complex. Essential for establishing and maintaining the structure of mitochondria and maintenance of mtDNA nucleoids. The sequence is that of Mitochondrial distribution and morphology protein 12 from Candida albicans (strain WO-1) (Yeast).